Reading from the N-terminus, the 92-residue chain is MACPLDQAISLLVAIFHKYSSREGDKNTLSKGELKELIQKELTIGAELEDSEIAKLLDDLDQNKDQVVNFQEYVTFLGALAMIYNEVLKACS.

2 consecutive EF-hand domains span residues 12 to 47 and 48 to 83; these read LVAI…IGAE and LEDS…LAMI. Residues Thr28 and Glu33 each coordinate Ca(2+). Lys40 carries the post-translational modification N6-acetyllysine. Ca(2+) is bound by residues Asp61, Asn63, Asp65, and Glu72.

This sequence belongs to the S-100 family. Homodimer; head to tail assembly of 2 subunits. Interacts with CACYBP in a calcium-dependent manner. Interacts with ANXA2 and ANXA11 (via N-terminus). Interacts with SUGT1. Interacts with TP53; has higher affinity for TP53 that is phosphorylated on its N-terminal domain, and lower affinity for TP53 that is phosphorylated on its C-terminal domain. Interacts with tropomyosin. Interacts with FKBP4. Interacts with PPP5C (via TPR repeats); the interaction is calcium-dependent and modulates PPP5C activity. Interacts with TPPP; this interaction inhibits TPPP dimerization.

The protein localises to the nucleus envelope. It is found in the cytoplasm. It localises to the cell membrane. Its function is as follows. May function as calcium sensor and modulator, contributing to cellular calcium signaling. May function by interacting with other proteins, such as TPR-containing proteins, and indirectly play a role in many physiological processes such as the reorganization of the actin cytoskeleton and in cell motility. Binds 2 calcium ions. Calcium binding is cooperative. The sequence is that of Protein S100-A6 (S100A6) from Equus caballus (Horse).